The chain runs to 171 residues: MAEKRNIFLVGPMGAGKSTIGRHLAQMLHLEFHDSDQEIEQRTGADIAWVFDVEGEEGFRRREAQVIADLSEKQGIVLATGGGSVQSKDIRNHLSARGIVVYLETTIDKQVARTQRDKRRPLLQVDDPREVLENLAEIRNPLYEEIADVIVKTDDQSAKVVANQIIEQLGF.

14-19 (GAGKST) provides a ligand contact to ATP. Ser-18 contacts Mg(2+). Asp-36, Arg-60, and Gly-82 together coordinate substrate. Arg-120 provides a ligand contact to ATP. Residue Arg-139 coordinates substrate. Gln-156 provides a ligand contact to ATP.

The protein belongs to the shikimate kinase family. In terms of assembly, monomer. It depends on Mg(2+) as a cofactor.

The protein resides in the cytoplasm. It catalyses the reaction shikimate + ATP = 3-phosphoshikimate + ADP + H(+). The protein operates within metabolic intermediate biosynthesis; chorismate biosynthesis; chorismate from D-erythrose 4-phosphate and phosphoenolpyruvate: step 5/7. Its function is as follows. Catalyzes the specific phosphorylation of the 3-hydroxyl group of shikimic acid using ATP as a cosubstrate. This chain is Shikimate kinase, found in Shewanella sp. (strain ANA-3).